The following is a 605-amino-acid chain: Inactive LRR receptor-like serine/threonine-protein kinase BIR2 (605 aa).

The first 28 residues, 1–28 (MKEIGSKPRKLLPLCFIIFLCFCSSVMA), serve as a signal peptide directing secretion. Over 29-229 (ADEDDIRCLR…CGGLSKKNLG (201 aa)) the chain is Extracellular. N-linked (GlcNAc...) asparagine glycosylation occurs at Asn-58. LRR repeat units lie at residues 101–125 (CASLQKLDLSSNRLSGNIPTELCNW), 127–150 (PFLVSLDLSNNELNGEIPPDLAKC), 152–173 (FVNSLVLSDNRLSGQIPVQFSA), and 174–197 (LGRLGRFSVANNDLSGRIPVFFSS). Residues 230–250 (IIIAAGVFGAAASMLLAFGIW) traverse the membrane as a helical segment. Over 251 to 605 (WYYHLKWTRR…IFDTQENEKV (355 aa)) the chain is Cytoplasmic. Ser-271 carries the phosphoserine; by BAK1 modification. Residue Thr-283 is modified to Phosphothreonine; by BAK1. Position 286 is a phosphoserine; by BAK1 (Ser-286). Thr-304 carries the post-translational modification Phosphothreonine; by BAK1. One can recognise a Protein kinase domain in the interval 307–578 (FNSENIIVST…FQAYQSLKAI (272 aa)). 313–321 (IVSTRTGTT) lines the ATP pocket. Ser-330 is subject to Phosphoserine; by BAK1. Lys-335 is a binding site for ATP. Position 389 is a phosphoserine; by BAK1 (Ser-389). Position 402 is a phosphothreonine (Thr-402). Ser-448 and Ser-462 each carry phosphoserine; by BAK1. A Phosphothreonine; by BAK1 modification is found at Thr-466. At Tyr-479 the chain carries Phosphotyrosine. Thr-482 carries the post-translational modification Phosphothreonine. Phosphoserine is present on Ser-486. Position 533 is a phosphothreonine; by BAK1 (Thr-533).

It belongs to the protein kinase superfamily. Ser/Thr protein kinase family. Interacts constitutively with BAK1, when phosphorylated, thereby preventing interaction with the ligand-binding LRR-RLK FLS2. Upon infection, pathogen-associated molecular patterns (PAMP) perception leads to BIR2 release from the BAK1 complex and enables the recruitment of BAK1 into the FLS2 complex. Phosphorylated by BAK1, this interacts promotes interaction with BAK1.

Its subcellular location is the cell membrane. Pseudokinases lacking protein kinase activity and unable to bind ATP-analogs. Negative regulator of pathogen-associated molecular patterns- (PAMP-) triggered immunity by limiting BAK1-receptor complex formation in the absence of ligands. The chain is Inactive LRR receptor-like serine/threonine-protein kinase BIR2 from Arabidopsis thaliana (Mouse-ear cress).